The chain runs to 152 residues: Transcriptional repressor NrdR (152 aa).

A zinc finger lies at 3 to 34; sequence CPFCNAADSKVIDSRLAAEGCQIRRRRECVSC. The ATP-cone domain maps to 49–139; that stretch reads PRVIKSNGKN…VYQDFQDVEA (91 aa).

This sequence belongs to the NrdR family. Requires Zn(2+) as cofactor.

Negatively regulates transcription of bacterial ribonucleotide reductase nrd genes and operons by binding to NrdR-boxes. In Acinetobacter baumannii (strain AB0057), this protein is Transcriptional repressor NrdR.